Consider the following 112-residue polypeptide: Urease subunit gamma (112 aa).

The protein belongs to the urease gamma subunit family. As to quaternary structure, heterotrimer of UreA (gamma), UreB (beta) and UreC (alpha) subunits. Three heterotrimers associate to form the active enzyme.

Its subcellular location is the cytoplasm. The enzyme catalyses urea + 2 H2O + H(+) = hydrogencarbonate + 2 NH4(+). It participates in nitrogen metabolism; urea degradation; CO(2) and NH(3) from urea (urease route): step 1/1. This Gloeothece citriformis (strain PCC 7424) (Cyanothece sp. (strain PCC 7424)) protein is Urease subunit gamma.